The following is a 378-amino-acid chain: Peptide chain release factor RF2 (378 aa).

Residue Gln-253 is modified to N5-methylglutamine.

This sequence belongs to the prokaryotic/mitochondrial release factor family. Interacts with the ribosome. Interacts with ribosomal protein L11. Recruited to stalled E.coli ribosomes by E.coli ArfA.

The protein localises to the cytoplasm. In terms of biological role, peptide chain release factor 2 directs the termination of translation in response to the peptide chain termination codons UGA and UAA. In endogenous ribosomes interacts with P-site tRNA and 23S rRNA. In the presence of truncated mRNA in the 70S ribosome, ArfA and RF2 interact such that the GGQ peptide hydrolysis motif of RF2 rises into the peptidyl-transferase center and releases the ribosome. Recruited to stalled E.coli 70S ribosomes by E.coli ArfA, but cannot be functionally accomodated in the peptidyl-transferase center. Note T.thermophilus probably does not encode arfA. The sequence is that of Peptide chain release factor RF2 (prfB) from Thermus thermophilus (strain ATCC 27634 / DSM 579 / HB8).